Reading from the N-terminus, the 592-residue chain is Sodium- and chloride-dependent transporter XTRP3 (592 aa).

The Cytoplasmic segment spans residues 1–5 (MEKAR). The chain crosses the membrane as a helical span at residues 6–26 (PLWANSLQFVFACISYAVGLG). Over 27-42 (NVWRFPYLCQMYGGGS) the chain is Extracellular. Residues 43–63 (FLVPYIIMLIVEGMPLLYLEL) form a helical membrane-spanning segment. Residues 64-79 (AVGQRMRQGSIGAWRT) are Cytoplasmic-facing. Residues 80-100 (ISPYLSGVGVASVVVSFFLSM) form a helical membrane-spanning segment. At 101–165 (YYNVINAWAF…ISPSLQENGG (65 aa)) the chain is on the extracellular side. The N-linked (GlcNAc...) asparagine glycan is linked to Asn131. Residues 166–186 (VQWEPALCLLLAWLVVYLCIL) form a helical membrane-spanning segment. Residues 187–194 (RGTESTGK) lie on the Cytoplasmic side of the membrane. A helical transmembrane segment spans residues 195–215 (VVYFTASLPYCVLIIYLIRGL). Over 216–241 (TLHGATNGLMYMFTPKIEQLANPKAW) the chain is Extracellular. The chain crosses the membrane as a helical span at residues 242–262 (INAATQIFFSLGLGFGSLIAF). The Cytoplasmic portion of the chain corresponds to 263-276 (ASYNEPSNNCQKHA). Residues 277–297 (IIVSLINSFTSIFASIVTFSI) form a helical membrane-spanning segment. At 298–389 (YGFKATFNYE…EAIKNMEVSQ (92 aa)) the chain is on the extracellular side. Residue Asn357 is glycosylated (N-linked (GlcNAc...) asparagine). The chain crosses the membrane as a helical span at residues 390–410 (LWSVLYFFMLLMLGIGSMLGN). Topologically, residues 411 to 431 (TAAILTPLTDSKIISSHLPKE) are cytoplasmic. The chain crosses the membrane as a helical span at residues 432-452 (AISGLVCLVNCAIGMVFTMEA). Topologically, residues 453–465 (GNYWFDIFNDYAA) are extracellular. Residues 466 to 486 (TLSLLLIVLVETIAVCYVYGL) form a helical membrane-spanning segment. Over 487–504 (RRFESDLKAMTGRAVSWY) the chain is Cytoplasmic. The chain crosses the membrane as a helical span at residues 505-525 (WKVMWAGVSPLLIVSLFVFYL). Over 526 to 554 (SDYILTGTLKYQAWDASQGQLVTKDYPAY) the chain is Extracellular. The chain crosses the membrane as a helical span at residues 555–575 (ALAVIGLLVASSTMCIPLAAL). Residues 576–592 (GTFVQRRLKRGDADPVA) lie on the Cytoplasmic side of the membrane.

It belongs to the sodium:neurotransmitter symporter (SNF) (TC 2.A.22) family. SLC6A20 subfamily. As to expression, kidney and small intestine. Expressed in the S3 segment of the proximal tubule. Expressed in neurons.

It is found in the apical cell membrane. It carries out the reaction L-proline(out) + chloride(out) + 2 Na(+)(out) = L-proline(in) + chloride(in) + 2 Na(+)(in). The enzyme catalyses L-pipecolate(out) + chloride(out) + 2 Na(+)(out) = L-pipecolate(in) + chloride(in) + 2 Na(+)(in). It catalyses the reaction sarcosine(out) + chloride(out) + 2 Na(+)(out) = sarcosine(in) + chloride(in) + 2 Na(+)(in). The catalysed reaction is N-methyl-L-proline(out) + chloride(out) + 2 Na(+)(out) = N-methyl-L-proline(in) + chloride(in) + 2 Na(+)(in). It carries out the reaction 2-methyl-2-(methylamino)propanoate(out) + chloride(out) + 2 Na(+)(out) = 2-methyl-2-(methylamino)propanoate(in) + chloride(in) + 2 Na(+)(in). The enzyme catalyses glycine betaine(out) + chloride(out) + 2 Na(+)(out) = glycine betaine(in) + chloride(in) + 2 Na(+)(in). It catalyses the reaction glycine(out) + chloride(out) + 2 Na(+)(out) = glycine(in) + chloride(in) + 2 Na(+)(in). Its function is as follows. Mediates the Na(+)- and Cl(-)-dependent uptake of imino acids such as L-proline, N-methyl-L-proline and pipecolate as well as N-methylated amino acids. Also transports glycine, regulates proline and glycine homeostasis in the brain playing a role in the modulation of NMDAR currents. This is Sodium- and chloride-dependent transporter XTRP3 from Homo sapiens (Human).